A 358-amino-acid chain; its full sequence is Uroporphyrinogen decarboxylase (358 aa).

Residues 28 to 32 (RQAGR), Asp78, Tyr154, Ser208, and His324 contribute to the substrate site.

Belongs to the uroporphyrinogen decarboxylase family. As to quaternary structure, homodimer.

Its subcellular location is the cytoplasm. The enzyme catalyses uroporphyrinogen III + 4 H(+) = coproporphyrinogen III + 4 CO2. It functions in the pathway porphyrin-containing compound metabolism; protoporphyrin-IX biosynthesis; coproporphyrinogen-III from 5-aminolevulinate: step 4/4. In terms of biological role, catalyzes the decarboxylation of four acetate groups of uroporphyrinogen-III to yield coproporphyrinogen-III. The chain is Uroporphyrinogen decarboxylase from Acidiphilium cryptum (strain JF-5).